We begin with the raw amino-acid sequence, 161 residues long: uncharacterized protein (161 aa).

The interval 126 to 161 (TPSNCGESSTSSGQSSGDESNCSLRTHGVYTRGEQH) is disordered. The span at 128-148 (SNCGESSTSSGQSSGDESNCS) shows a compositional bias: low complexity.

Belongs to the herpesviridae US1 family.

This is an uncharacterized protein from Human cytomegalovirus (strain AD169) (HHV-5).